The primary structure comprises 689 residues: MPLTVRAGHAPYRLPLSNYWWLLLGRHSLRHVHSYLRLHKGLRIPLPWPEQECLHLHPKPYKCLLRYPCITRQPHLLQGWPTKSSLWFDPKPYHPSADSKLLPLGLITLSACSTRVSATTRWSSFHATDPSLSWLTGSSPWLVILQGQGGSLFCHDVLQGRLYILSHSVSLFLKTGLRHCEAIYRAPLWRDRPLPSLWTCRDPDKAFLPTLLARSARRGLAAFYALWRLHLGSRSELSHPVLEWESTELVLTDWRRGRNEAQRDAPSVAEHFARCRPLLDELCGEGGWLPFAFLSTSPHVWLILTEGGPVLAVDVNDTSVWRIADDLELLRRLGSLLLLSGLRLPLRPPSGSGEAAGEPGYEEEERRGRASTASATAATSTRGPTRPTRVTRKGRVATGGVHLSARPESEEQTDGHHGRQESSDDHQRGGSGRGHRDDGAHRHANDKTEPQQRGEHEERKQTDSGRHEHAQESQVARRDEEETEQGDSERSCGGATQTYGGRGRHDSCPSIPLSVPGPDPRLWVPPPHLLFPSPLPPMTPVDDEPSVRPRCPPGPAEEPPTCRPRPPRPSSDTPLSAVSRPSAPPVPPPSTARVRFFLSSSSSSPSYSPAPLSPPSPVSPSSPRSPFIPPIRSPGLRAKPRVSSGHPAAFPPAPSSAPARSERVTSVPSSASPSASCVGKSQPPAAHTA.

Low complexity-rich tracts occupy residues 347–359 and 370–388; these read RPPS…AGEP and ASTA…TRPT. The disordered stretch occupies residues 347 to 689; it reads RPPSGSGEAA…KSQPPAAHTA (343 aa). The span at 405–480 shows a compositional bias: basic and acidic residues; that stretch reads ARPESEEQTD…QESQVARRDE (76 aa). 2 stretches are compositionally biased toward pro residues: residues 515–539 and 550–569; these read VPGP…PPMT and RCPP…PPRP. Low complexity-rich tracts occupy residues 570–581 and 591–610; these read SSDTPLSAVSRP and TARV…YSPA. The span at 611-620 shows a compositional bias: pro residues; sequence PLSPPSPVSP. Low complexity predominate over residues 666 to 676; it reads SVPSSASPSAS.

This is an uncharacterized protein from Homo sapiens (Human).